A 501-amino-acid polypeptide reads, in one-letter code: Alveolysin (501 aa).

The N-terminal stretch at 1-32 (MKKKSNHLKGRKVLVSLLVSLQVFAFASISSA) is a signal peptide. Transmembrane regions (beta stranded) follow at residues 191–204 (QNQISSALNVNAKV), 211–220 (IDFNAVANGE), 289–298 (SNDVQTAFKL), and 306–318 (QASGQYKDIYENS). The Conserved undecapeptide signature appears at 460–470 (ECTGLAWEWWR). The Cholesterol binding motif lies at 492 to 493 (TL).

This sequence belongs to the cholesterol-dependent cytolysin family. In terms of assembly, homooligomeric pore complex of 35 to 50 subunits; when inserted in the host membrane.

The protein localises to the secreted. It is found in the host cell membrane. Its activity is regulated as follows. Inhibited by cholesterol and thiol reagents. Its function is as follows. A cholesterol-dependent toxin that causes cytolysis by forming pores in cholesterol containing host membranes. After binding to target membranes, the protein undergoes a major conformation change, leading to its insertion in the host membrane and formation of an oligomeric pore complex. Cholesterol is required for binding to host cell membranes, membrane insertion and pore formation; cholesterol binding is mediated by a Thr-Leu pair in the C-terminus. Can be reversibly inactivated by oxidation. The chain is Alveolysin (alv) from Paenibacillus alvei (Bacillus alvei).